The primary structure comprises 202 residues: Small ribosomal subunit protein uS4c (202 aa).

One can recognise an S4 RNA-binding domain in the interval 90–158 (MRSDNVIFRL…ISKNIELYQK (69 aa)).

This sequence belongs to the universal ribosomal protein uS4 family. Part of the 30S ribosomal subunit. Contacts protein S5. The interaction surface between S4 and S5 is involved in control of translational fidelity.

It is found in the plastid. The protein resides in the chloroplast. Functionally, one of the primary rRNA binding proteins, it binds directly to 16S rRNA where it nucleates assembly of the body of the 30S subunit. In terms of biological role, with S5 and S12 plays an important role in translational accuracy. This is Small ribosomal subunit protein uS4c (rps4) from Anthoceros punctatus (Hornwort).